A 405-amino-acid chain; its full sequence is S-adenosylmethionine synthase (405 aa).

Position 22 (histidine 22) interacts with ATP. Aspartate 24 is a binding site for Mg(2+). Residue glutamate 50 coordinates K(+). 2 residues coordinate L-methionine: glutamate 63 and glutamine 107. The tract at residues 107 to 117 is flexible loop; it reads QSPDIAQGVDR. Residues 184–186, 250–251, aspartate 259, 265–266, alanine 282, and lysine 286 each bind ATP; these read DGK, RF, and RK. Aspartate 259 is a binding site for L-methionine. An L-methionine-binding site is contributed by lysine 290.

Belongs to the AdoMet synthase family. In terms of assembly, homotetramer; dimer of dimers. Requires Mg(2+) as cofactor. K(+) is required as a cofactor.

The protein localises to the cytoplasm. The enzyme catalyses L-methionine + ATP + H2O = S-adenosyl-L-methionine + phosphate + diphosphate. The protein operates within amino-acid biosynthesis; S-adenosyl-L-methionine biosynthesis; S-adenosyl-L-methionine from L-methionine: step 1/1. Its function is as follows. Catalyzes the formation of S-adenosylmethionine (AdoMet) from methionine and ATP. The overall synthetic reaction is composed of two sequential steps, AdoMet formation and the subsequent tripolyphosphate hydrolysis which occurs prior to release of AdoMet from the enzyme. This chain is S-adenosylmethionine synthase, found in Roseiflexus sp. (strain RS-1).